The sequence spans 91 residues: Small ribosomal subunit protein uS19 (91 aa).

The protein belongs to the universal ribosomal protein uS19 family.

Its function is as follows. Protein S19 forms a complex with S13 that binds strongly to the 16S ribosomal RNA. In Desulfotalea psychrophila (strain LSv54 / DSM 12343), this protein is Small ribosomal subunit protein uS19.